The sequence spans 369 residues: Endophilin-A (369 aa).

The 231-residue stretch at Thr18–Ser248 folds into the BAR domain. Positions Gln227 to Glu247 form a coiled coil. A compositionally biased stretch (low complexity) spans Gly275 to Pro294. Positions Gly275–Lys296 are disordered. The region spanning Gln305–Pro364 is the SH3 domain.

The protein belongs to the endophilin family.

It is found in the cytoplasm. The protein localises to the membrane. Functionally, required presynaptically at the neuromuscular junction. Implicated in synaptic vesicle endocytosis. In Drosophila pseudoobscura pseudoobscura (Fruit fly), this protein is Endophilin-A.